Consider the following 220-residue polypeptide: Aspartic protease inhibitor 8 (220 aa).

A signal peptide spans 1 to 23 (MMKCLFLLCLCLLPIVVFSSTFT). A propeptide spanning residues 24–32 (SQNLIDLPS) is cleaved from the precursor. 2 disulfide bridges follow: cysteine 80-cysteine 125 and cysteine 174-cysteine 185.

Belongs to the protease inhibitor I3 (leguminous Kunitz-type inhibitor) family.

Its subcellular location is the vacuole. Functionally, inhibitor of cathepsin D (aspartic protease) and trypsin (serine protease). May protect the plant by inhibiting proteases of invading organisms. This is Aspartic protease inhibitor 8 from Solanum tuberosum (Potato).